The chain runs to 269 residues: MNLNNLENIRYNEIKEFSDKIKKEFTFSQEKQVMDIIEKLNKDPRKNVIKLGQALEKFLNKYEEELKRTNNMYNFDRRYGNNYLIAGVDEVGRGPLAGPIVAAAVVLDLNVEEMQRIFNIKDSKKLSEKKREELDIIIREKAISYNIALVDNKTIDERGISWSNNEVLKRAVEGLKVKPDLVLSDGYAVKNLNIRNEFIIKGDSKSISIASSSIIAKVYRDNMMKEYSKELNMYGFNHNAGYGTEEHVQAIKKYGPSKIHRMSFLTNIL.

The RNase H type-2 domain maps to 83-269; it reads YLIAGVDEVG…HRMSFLTNIL (187 aa). Asp89, Glu90, and Asp185 together coordinate a divalent metal cation.

This sequence belongs to the RNase HII family. Mn(2+) is required as a cofactor. Requires Mg(2+) as cofactor.

Its subcellular location is the cytoplasm. It carries out the reaction Endonucleolytic cleavage to 5'-phosphomonoester.. Its function is as follows. Endonuclease that specifically degrades the RNA of RNA-DNA hybrids. In Clostridium botulinum (strain Loch Maree / Type A3), this protein is Ribonuclease HII.